Here is a 359-residue protein sequence, read N- to C-terminus: Bergaptol O-methyltransferase (359 aa).

His-126 is a binding site for bergaptol. Residues Ser-179, Gly-203, Asp-226, Asp-246, and Lys-260 each coordinate S-adenosyl-L-homocysteine. His-264 is a binding site for bergaptol. Catalysis depends on His-264, which acts as the Proton acceptor.

The protein belongs to the class I-like SAM-binding methyltransferase superfamily. Cation-independent O-methyltransferase family. COMT subfamily. As to quaternary structure, homodimer. In terms of tissue distribution, mostly expressed in roots and, to a lower extent, in stems and leaves.

The protein resides in the cytoplasm. It catalyses the reaction bergaptol + S-adenosyl-L-methionine = bergapten + S-adenosyl-L-homocysteine. Its pathway is aromatic compound metabolism. It participates in secondary metabolite biosynthesis. In terms of biological role, O-methyltransferase involved in the biosynthesis of furocoumarins natural products such as bergapten, a photosensitizer used for medical purpose such as treating psoriasis and vitiligo or facilitating resistance to microbial infection and other stresses. Catalyzes specifically the methylation of bergaptol. Not active on xanthotol, isoscopoletin, scopoletin and esculetin. The protein is Bergaptol O-methyltransferase of Kitagawia praeruptora (Peucedanum praeruptorum).